Reading from the N-terminus, the 575-residue chain is Arginine--tRNA ligase (575 aa).

The short motif at Ala-130 to His-140 is the 'HIGH' region element.

It belongs to the class-I aminoacyl-tRNA synthetase family. As to quaternary structure, monomer.

Its subcellular location is the cytoplasm. It carries out the reaction tRNA(Arg) + L-arginine + ATP = L-arginyl-tRNA(Arg) + AMP + diphosphate. The sequence is that of Arginine--tRNA ligase from Magnetococcus marinus (strain ATCC BAA-1437 / JCM 17883 / MC-1).